Reading from the N-terminus, the 226-residue chain is Ribosome maturation factor RimP (226 aa).

The tract at residues 190–226 (VFPDTTRPQPGGKTGQRKKAQPKKPARGGAPHDDTTD) is disordered. The span at 204 to 215 (GQRKKAQPKKPA) shows a compositional bias: basic residues.

This sequence belongs to the RimP family.

The protein resides in the cytoplasm. In terms of biological role, required for maturation of 30S ribosomal subunits. In Nitratidesulfovibrio vulgaris (strain DSM 19637 / Miyazaki F) (Desulfovibrio vulgaris), this protein is Ribosome maturation factor RimP.